A 148-amino-acid chain; its full sequence is Large ribosomal subunit protein bL9 (148 aa).

This sequence belongs to the bacterial ribosomal protein bL9 family.

Functionally, binds to the 23S rRNA. In Acetivibrio thermocellus (strain ATCC 27405 / DSM 1237 / JCM 9322 / NBRC 103400 / NCIMB 10682 / NRRL B-4536 / VPI 7372) (Clostridium thermocellum), this protein is Large ribosomal subunit protein bL9.